We begin with the raw amino-acid sequence, 140 residues long: Holo-[acyl-carrier-protein] synthase (140 aa).

Mg(2+) contacts are provided by Asp-7 and Glu-58.

It belongs to the P-Pant transferase superfamily. AcpS family. Mg(2+) serves as cofactor.

It is found in the cytoplasm. It catalyses the reaction apo-[ACP] + CoA = holo-[ACP] + adenosine 3',5'-bisphosphate + H(+). Functionally, transfers the 4'-phosphopantetheine moiety from coenzyme A to a Ser of acyl-carrier-protein. This chain is Holo-[acyl-carrier-protein] synthase, found in Chloroflexus aggregans (strain MD-66 / DSM 9485).